An 81-amino-acid polypeptide reads, in one-letter code: Protein RALF-like 6 (81 aa).

The N-terminal stretch at 1–29 (MAAHKKSHIRIFFVSVMIILSLFSGFGEG) is a signal peptide. 2 cysteine pairs are disulfide-bonded: Cys46–Cys54 and Cys66–Cys72.

Belongs to the plant rapid alkalinization factor (RALF) family.

The protein resides in the secreted. Cell signaling peptide that may regulate plant stress, growth, and development. Mediates a rapid alkalinization of extracellular space by mediating a transient increase in the cytoplasmic Ca(2+) concentration leading to a calcium-dependent signaling events through a cell surface receptor and a concomitant activation of some intracellular mitogen-activated protein kinases. The sequence is that of Protein RALF-like 6 (RALFL6) from Arabidopsis thaliana (Mouse-ear cress).